Consider the following 193-residue polypeptide: Glycerol-3-phosphate acyltransferase (193 aa).

5 helical membrane passes run 2-22 (AFII…AVIV), 51-71 (QAAF…VLIA), 78-98 (GVSL…PVYF), 112-132 (VLLG…VIVV), and 154-174 (IIAG…LIIW).

The protein belongs to the PlsY family. As to quaternary structure, probably interacts with PlsX.

The protein localises to the cell inner membrane. The enzyme catalyses an acyl phosphate + sn-glycerol 3-phosphate = a 1-acyl-sn-glycero-3-phosphate + phosphate. The protein operates within lipid metabolism; phospholipid metabolism. Functionally, catalyzes the transfer of an acyl group from acyl-phosphate (acyl-PO(4)) to glycerol-3-phosphate (G3P) to form lysophosphatidic acid (LPA). This enzyme utilizes acyl-phosphate as fatty acyl donor, but not acyl-CoA or acyl-ACP. The protein is Glycerol-3-phosphate acyltransferase of Coxiella burnetii (strain CbuK_Q154) (Coxiella burnetii (strain Q154)).